Reading from the N-terminus, the 92-residue chain is MPNTKSAEKHQRKSQRKRIFNLRAKKELKEQIKQLKDLIEAKKKQEALAFFPKIQSLLDRLVKRKKLVANNANRKKRRLLEKIEKITGDGIS.

Belongs to the bacterial ribosomal protein bS20 family.

Its function is as follows. Binds directly to 16S ribosomal RNA. The sequence is that of Small ribosomal subunit protein bS20 from Methylacidiphilum infernorum (isolate V4) (Methylokorus infernorum (strain V4)).